Here is a 103-residue protein sequence, read N- to C-terminus: Large ribosomal subunit protein uL24 (103 aa).

It belongs to the universal ribosomal protein uL24 family. As to quaternary structure, part of the 50S ribosomal subunit.

Its function is as follows. One of two assembly initiator proteins, it binds directly to the 5'-end of the 23S rRNA, where it nucleates assembly of the 50S subunit. Functionally, one of the proteins that surrounds the polypeptide exit tunnel on the outside of the subunit. This chain is Large ribosomal subunit protein uL24, found in Synechococcus sp. (strain CC9311).